We begin with the raw amino-acid sequence, 798 residues long: Penicillin-binding protein 1A (798 aa).

The Cytoplasmic segment spans residues 1–9 (MIKKILTTC). Residues 10-30 (FGLVFGFCVFGVGLVAIAILV) form a helical; Signal-anchor for type II membrane protein membrane-spanning segment. Topologically, residues 31–798 (TYPKLPSLDS…SKQQQLDSLF (768 aa)) are periplasmic. Residues 50–218 (LTIYSADGEV…SAYNPIVNPE (169 aa)) are transglycosylase. The Proton donor; for transglycosylase activity role is filled by Glu-88. The tract at residues 378-700 (RRALGFAARA…GTIAVPVWVD (323 aa)) is transpeptidase. The Acyl-ester intermediate; for transpeptidase activity role is filled by Ser-461. The tract at residues 738 to 798 (GLTLDNSGIA…SKQQQLDSLF (61 aa)) is disordered. Residues 768–777 (AADDEVRQDM) are compositionally biased toward basic and acidic residues. Residues 783–798 (LPSNTGSKQQQLDSLF) are compositionally biased toward polar residues.

In the N-terminal section; belongs to the glycosyltransferase 51 family. The protein in the C-terminal section; belongs to the transpeptidase family.

The protein localises to the cell inner membrane. The enzyme catalyses [GlcNAc-(1-&gt;4)-Mur2Ac(oyl-L-Ala-gamma-D-Glu-L-Lys-D-Ala-D-Ala)](n)-di-trans,octa-cis-undecaprenyl diphosphate + beta-D-GlcNAc-(1-&gt;4)-Mur2Ac(oyl-L-Ala-gamma-D-Glu-L-Lys-D-Ala-D-Ala)-di-trans,octa-cis-undecaprenyl diphosphate = [GlcNAc-(1-&gt;4)-Mur2Ac(oyl-L-Ala-gamma-D-Glu-L-Lys-D-Ala-D-Ala)](n+1)-di-trans,octa-cis-undecaprenyl diphosphate + di-trans,octa-cis-undecaprenyl diphosphate + H(+). It carries out the reaction Preferential cleavage: (Ac)2-L-Lys-D-Ala-|-D-Ala. Also transpeptidation of peptidyl-alanyl moieties that are N-acyl substituents of D-alanine.. Its pathway is cell wall biogenesis; peptidoglycan biosynthesis. Cell wall formation. Synthesis of cross-linked peptidoglycan from the lipid intermediates. The enzyme has a penicillin-insensitive transglycosylase N-terminal domain (formation of linear glycan strands) and a penicillin-sensitive transpeptidase C-terminal domain (cross-linking of the peptide subunits). The polypeptide is Penicillin-binding protein 1A (mrcA) (Neisseria meningitidis serogroup A / serotype 4A (strain DSM 15465 / Z2491)).